A 465-amino-acid chain; its full sequence is Kynureninase (465 aa).

N-acetylmethionine is present on methionine 1. Pyridoxal 5'-phosphate contacts are provided by residues leucine 137, threonine 138, 165-168, serine 221, aspartate 250, histidine 253, and tyrosine 275; that span reads FPSD. Lysine 276 bears the N6-(pyridoxal phosphate)lysine mark. The pyridoxal 5'-phosphate site is built by tryptophan 305 and asparagine 333.

The protein belongs to the kynureninase family. In terms of assembly, homodimer. Pyridoxal 5'-phosphate is required as a cofactor. Expressed in all tissues tested (heart, brain placenta, lung, liver, skeletal muscle, kidney and pancreas). Highest levels found in placenta, liver and lung. Expressed in all brain regions.

Its subcellular location is the cytoplasm. The protein resides in the cytosol. The catalysed reaction is L-kynurenine + H2O = anthranilate + L-alanine + H(+). It catalyses the reaction 3-hydroxy-L-kynurenine + H2O = 3-hydroxyanthranilate + L-alanine + H(+). It participates in amino-acid degradation; L-kynurenine degradation; L-alanine and anthranilate from L-kynurenine: step 1/1. The protein operates within cofactor biosynthesis; NAD(+) biosynthesis; quinolinate from L-kynurenine: step 2/3. Its activity is regulated as follows. Inhibited by o-methoxybenzoylalanine (OMBA). Catalyzes the cleavage of L-kynurenine (L-Kyn) and L-3-hydroxykynurenine (L-3OHKyn) into anthranilic acid (AA) and 3-hydroxyanthranilic acid (3-OHAA), respectively. Has a preference for the L-3-hydroxy form. Also has cysteine-conjugate-beta-lyase activity. The polypeptide is Kynureninase (Homo sapiens (Human)).